We begin with the raw amino-acid sequence, 122 residues long: Double-headed protease inhibitor, submandibular gland (122 aa).

2 consecutive Kazal-like domains span residues Gly-10–Ile-70 and Glu-71–Ser-121. 6 cysteine pairs are disulfide-bonded: Cys-16/Cys-50, Cys-28/Cys-47, Cys-36/Cys-68, Cys-72/Cys-101, Cys-79/Cys-98, and Cys-87/Cys-119.

Its subcellular location is the secreted. Its function is as follows. This inhibitor is composed of two homologous actively inhibiting halves: one which inhibits trypsin, the other which inhibits elastase. In Meles meles (Eurasian badger), this protein is Double-headed protease inhibitor, submandibular gland.